Reading from the N-terminus, the 425-residue chain is Trigger factor (425 aa).

One can recognise a PPIase FKBP-type domain in the interval 163 to 248; that stretch reads GDTAVIDFEG…VHEIKTKELP (86 aa).

The protein belongs to the FKBP-type PPIase family. Tig subfamily.

It is found in the cytoplasm. It carries out the reaction [protein]-peptidylproline (omega=180) = [protein]-peptidylproline (omega=0). Involved in protein export. Acts as a chaperone by maintaining the newly synthesized protein in an open conformation. Functions as a peptidyl-prolyl cis-trans isomerase. The polypeptide is Trigger factor (Bacillus cereus (strain ATCC 10987 / NRS 248)).